Here is a 203-residue protein sequence, read N- to C-terminus: Pyridoxal 5'-phosphate synthase subunit PdxT (203 aa).

Position 54–56 (54–56 (GES)) interacts with L-glutamine. The active-site Nucleophile is Cys86. Residues Arg113 and 141 to 142 (IR) contribute to the L-glutamine site. Catalysis depends on charge relay system residues His177 and Glu179.

This sequence belongs to the glutaminase PdxT/SNO family. In the presence of PdxS, forms a dodecamer of heterodimers. Only shows activity in the heterodimer.

It carries out the reaction aldehydo-D-ribose 5-phosphate + D-glyceraldehyde 3-phosphate + L-glutamine = pyridoxal 5'-phosphate + L-glutamate + phosphate + 3 H2O + H(+). The catalysed reaction is L-glutamine + H2O = L-glutamate + NH4(+). Its pathway is cofactor biosynthesis; pyridoxal 5'-phosphate biosynthesis. In terms of biological role, catalyzes the hydrolysis of glutamine to glutamate and ammonia as part of the biosynthesis of pyridoxal 5'-phosphate. The resulting ammonia molecule is channeled to the active site of PdxS. The chain is Pyridoxal 5'-phosphate synthase subunit PdxT from Halobacterium salinarum (strain ATCC 29341 / DSM 671 / R1).